Consider the following 200-residue polypeptide: Phospholipase D (200 aa).

Residues 1–25 form the signal peptide; that stretch reads MKRKNNKFIEISIAFILGIALGLYG. The 28-residue stretch at 142 to 169 folds into the PLD phosphodiesterase domain; it reads VPGIAHNKVIIIDKKKVITGSFNFTAAA. Active-site residues include His-147, Lys-149, and Asp-154.

This sequence belongs to the phospholipase D family. As to quaternary structure, homodimer.

It localises to the secreted. The enzyme catalyses a 1,2-diacyl-sn-glycero-3-phosphocholine + H2O = a 1,2-diacyl-sn-glycero-3-phosphate + choline + H(+). Functionally, could be a virulence factor. This is Phospholipase D (pld) from Rickettsia conorii (strain ATCC VR-613 / Malish 7).